Reading from the N-terminus, the 341-residue chain is L-threonine 3-dehydrogenase (341 aa).

Cys-38 serves as a coordination point for Zn(2+). Catalysis depends on charge relay system residues Thr-40 and His-43. Residues His-63, Glu-64, Cys-93, Cys-96, Cys-99, and Cys-107 each coordinate Zn(2+). NAD(+) is bound by residues Ile-175, Asp-195, Arg-200, Leu-262 to Ile-264, and Ile-286 to Tyr-287.

This sequence belongs to the zinc-containing alcohol dehydrogenase family. As to quaternary structure, homotetramer. Zn(2+) is required as a cofactor.

The protein resides in the cytoplasm. The catalysed reaction is L-threonine + NAD(+) = (2S)-2-amino-3-oxobutanoate + NADH + H(+). Its pathway is amino-acid degradation; L-threonine degradation via oxydo-reductase pathway; glycine from L-threonine: step 1/2. Its function is as follows. Catalyzes the NAD(+)-dependent oxidation of L-threonine to 2-amino-3-ketobutyrate. This Cronobacter sakazakii (strain ATCC BAA-894) (Enterobacter sakazakii) protein is L-threonine 3-dehydrogenase.